A 277-amino-acid chain; its full sequence is Nuclear egress protein 2 (277 aa).

Over 1 to 250 (MEVIPNINSR…ASGECVTTIR (250 aa)) the chain is Perinuclear space. The helical transmembrane segment at 251-271 (IPRYIVMLWIFSVLLAMVTWG) threads the bilayer. At 272-277 (SYRLYS) the chain is on the nuclear side.

It belongs to the herpesviridae NEC2 protein family. In terms of assembly, forms a heterohexameric complex with NEC1. In terms of processing, phosphorylated.

It is found in the host nucleus inner membrane. Its function is as follows. Plays an essential role in virion nuclear egress, the first step of virion release from infected cell. Within the host nucleus, NEC1 interacts with the newly formed capsid through the vertexes and directs it to the inner nuclear membrane by associating with NEC2. Induces the budding of the capsid at the inner nuclear membrane as well as its envelopment into the perinuclear space. There, the NEC1/NEC2 complex promotes the fusion of the enveloped capsid with the outer nuclear membrane and the subsequent release of the viral capsid into the cytoplasm where it will reach the secondary budding sites in the host Golgi or trans-Golgi network. The sequence is that of Nuclear egress protein 2 from Gallid herpesvirus 2 (strain Chicken/Md5/ATCC VR-987) (GaHV-2).